The sequence spans 218 residues: Pyridoxine/pyridoxamine 5'-phosphate oxidase (218 aa).

Substrate-binding positions include 14-17 (RREY) and Lys72. Residues 67–72 (RIVLLK), 82–83 (YT), Arg88, Lys89, and Gln111 contribute to the FMN site. Substrate-binding residues include Tyr129, Arg133, and Ser137. FMN-binding positions include 146–147 (QS) and Trp191. Substrate is bound at residue 197-199 (RLH). An FMN-binding site is contributed by Arg201.

The protein belongs to the pyridoxamine 5'-phosphate oxidase family. In terms of assembly, homodimer. Requires FMN as cofactor.

The catalysed reaction is pyridoxamine 5'-phosphate + O2 + H2O = pyridoxal 5'-phosphate + H2O2 + NH4(+). It carries out the reaction pyridoxine 5'-phosphate + O2 = pyridoxal 5'-phosphate + H2O2. The protein operates within cofactor metabolism; pyridoxal 5'-phosphate salvage; pyridoxal 5'-phosphate from pyridoxamine 5'-phosphate: step 1/1. Its pathway is cofactor metabolism; pyridoxal 5'-phosphate salvage; pyridoxal 5'-phosphate from pyridoxine 5'-phosphate: step 1/1. Its function is as follows. Catalyzes the oxidation of either pyridoxine 5'-phosphate (PNP) or pyridoxamine 5'-phosphate (PMP) into pyridoxal 5'-phosphate (PLP). In Escherichia coli O45:K1 (strain S88 / ExPEC), this protein is Pyridoxine/pyridoxamine 5'-phosphate oxidase.